Here is a 156-residue protein sequence, read N- to C-terminus: Ribonuclease H (156 aa).

The 142-residue stretch at 3-144 folds into the RNase H type-1 domain; it reads ERKLIHIFTD…CDILARSAAE (142 aa). Asp12, Glu50, Asp72, and Asp136 together coordinate Mg(2+).

The protein belongs to the RNase H family. As to quaternary structure, monomer. Requires Mg(2+) as cofactor.

Its subcellular location is the cytoplasm. The catalysed reaction is Endonucleolytic cleavage to 5'-phosphomonoester.. Functionally, endonuclease that specifically degrades the RNA of RNA-DNA hybrids. This chain is Ribonuclease H, found in Shewanella putrefaciens (strain CN-32 / ATCC BAA-453).